A 625-amino-acid polypeptide reads, in one-letter code: Phosphomethylpyrimidine synthase (625 aa).

Substrate-binding positions include asparagine 230, methionine 259, tyrosine 288, histidine 324, 344–346 (SRG), 385–388 (DGLR), and glutamate 424. Position 428 (histidine 428) interacts with Zn(2+). Residue tyrosine 451 coordinates substrate. Zn(2+) is bound at residue histidine 492. Cysteine 572, cysteine 575, and cysteine 580 together coordinate [4Fe-4S] cluster.

The protein belongs to the ThiC family. In terms of assembly, homodimer. It depends on [4Fe-4S] cluster as a cofactor.

It carries out the reaction 5-amino-1-(5-phospho-beta-D-ribosyl)imidazole + S-adenosyl-L-methionine = 4-amino-2-methyl-5-(phosphooxymethyl)pyrimidine + CO + 5'-deoxyadenosine + formate + L-methionine + 3 H(+). The protein operates within cofactor biosynthesis; thiamine diphosphate biosynthesis. Its function is as follows. Catalyzes the synthesis of the hydroxymethylpyrimidine phosphate (HMP-P) moiety of thiamine from aminoimidazole ribotide (AIR) in a radical S-adenosyl-L-methionine (SAM)-dependent reaction. This chain is Phosphomethylpyrimidine synthase, found in Xanthomonas euvesicatoria pv. vesicatoria (strain 85-10) (Xanthomonas campestris pv. vesicatoria).